The primary structure comprises 142 residues: Large ribosomal subunit protein uL13 (142 aa).

The protein belongs to the universal ribosomal protein uL13 family. In terms of assembly, part of the 50S ribosomal subunit.

This protein is one of the early assembly proteins of the 50S ribosomal subunit, although it is not seen to bind rRNA by itself. It is important during the early stages of 50S assembly. The polypeptide is Large ribosomal subunit protein uL13 (Proteus mirabilis (strain HI4320)).